The sequence spans 304 residues: uncharacterized protein (304 aa).

Polar residues predominate over residues 226–244; that stretch reads SRNSESSRQSNLNSPNDSV. Residues 226-263 form a disordered region; that stretch reads SRNSESSRQSNLNSPNDSVKFNEFNKSNKSTKTNPNNI. A compositionally biased stretch (low complexity) spans 246 to 262; the sequence is FNEFNKSNKSTKTNPNN.

This is an uncharacterized protein from Acanthamoeba polyphaga (Amoeba).